Consider the following 285-residue polypeptide: Polyamine aminopropyltransferase (285 aa).

The 236-residue stretch at 2–237 (EFWFSELHSP…GYWLFGFASK (236 aa)) folds into the PABS domain. Gln31 contacts S-methyl-5'-thioadenosine. Spermidine is bound at residue Asp86. S-methyl-5'-thioadenosine-binding positions include Glu106 and 137–138 (DA). The active-site Proton acceptor is Asp155.

This sequence belongs to the spermidine/spermine synthase family. As to quaternary structure, homodimer or homotetramer.

It localises to the cytoplasm. It carries out the reaction S-adenosyl 3-(methylsulfanyl)propylamine + putrescine = S-methyl-5'-thioadenosine + spermidine + H(+). It functions in the pathway amine and polyamine biosynthesis; spermidine biosynthesis; spermidine from putrescine: step 1/1. Functionally, catalyzes the irreversible transfer of a propylamine group from the amino donor S-adenosylmethioninamine (decarboxy-AdoMet) to putrescine (1,4-diaminobutane) to yield spermidine. The chain is Polyamine aminopropyltransferase from Lachnospira eligens (strain ATCC 27750 / DSM 3376 / VPI C15-48 / C15-B4) (Eubacterium eligens).